Reading from the N-terminus, the 121-residue chain is Holo-[acyl-carrier-protein] synthase (121 aa).

Positions 8 and 58 each coordinate Mg(2+).

This sequence belongs to the P-Pant transferase superfamily. AcpS family. Homotrimer. Requires Mg(2+) as cofactor.

It localises to the cytoplasm. The catalysed reaction is apo-[ACP] + CoA = holo-[ACP] + adenosine 3',5'-bisphosphate + H(+). Transfers the 4'-phosphopantetheine moiety from coenzyme A to a Ser of fatty acid acyl-carrier-protein ACP. Also modifies the D-alanyl carrier protein but fails to recognize PCP and AcpK, an acyl carrier protein of secondary metabolism. This is Holo-[acyl-carrier-protein] synthase from Bacillus subtilis (strain 168).